We begin with the raw amino-acid sequence, 146 residues long: Ribosome-binding factor A (146 aa).

The tract at residues 113–146 (IRDEREAQEPAQDPAQDSSQDASVEASDAPDKAE) is disordered.

Belongs to the RbfA family. As to quaternary structure, monomer. Binds 30S ribosomal subunits, but not 50S ribosomal subunits or 70S ribosomes.

The protein localises to the cytoplasm. In terms of biological role, one of several proteins that assist in the late maturation steps of the functional core of the 30S ribosomal subunit. Associates with free 30S ribosomal subunits (but not with 30S subunits that are part of 70S ribosomes or polysomes). Required for efficient processing of 16S rRNA. May interact with the 5'-terminal helix region of 16S rRNA. This Gemmatimonas aurantiaca (strain DSM 14586 / JCM 11422 / NBRC 100505 / T-27) protein is Ribosome-binding factor A.